Here is a 382-residue protein sequence, read N- to C-terminus: Anhydro-N-acetylmuramic acid kinase (382 aa).

9-16 (GTSLDGID) is an ATP binding site.

The protein belongs to the anhydro-N-acetylmuramic acid kinase family.

It carries out the reaction 1,6-anhydro-N-acetyl-beta-muramate + ATP + H2O = N-acetyl-D-muramate 6-phosphate + ADP + H(+). It functions in the pathway amino-sugar metabolism; 1,6-anhydro-N-acetylmuramate degradation. Its pathway is cell wall biogenesis; peptidoglycan recycling. Its function is as follows. Catalyzes the specific phosphorylation of 1,6-anhydro-N-acetylmuramic acid (anhMurNAc) with the simultaneous cleavage of the 1,6-anhydro ring, generating MurNAc-6-P. Is required for the utilization of anhMurNAc either imported from the medium or derived from its own cell wall murein, and thus plays a role in cell wall recycling. This is Anhydro-N-acetylmuramic acid kinase from Bacillus anthracis (strain A0248).